A 99-amino-acid chain; its full sequence is Transmembrane protein 14A (99 aa).

The next 3 membrane-spanning stretches (helical) occupy residues 1–21 (MDLI…FGYK), 24–44 (GGVP…YGAY), and 79–99 (PAGL…LLLL).

Belongs to the TMEM14 family. Expressed at significantly higher levels in ovarian cancer tissues than in normal tissues (at protein level).

It localises to the mitochondrion membrane. Its subcellular location is the endoplasmic reticulum membrane. Inhibits apoptosis via negative regulation of the mitochondrial outer membrane permeabilization involved in apoptotic signaling pathway. This Homo sapiens (Human) protein is Transmembrane protein 14A (TMEM14A).